We begin with the raw amino-acid sequence, 277 residues long: Large ribosomal subunit protein uL2 (277 aa).

Disordered regions lie at residues 37 to 59 (KNST…GGHK) and 221 to 265 (RGTA…KRTD). The span at 50–59 (TTRHRGGGHK) shows a compositional bias: basic residues. The segment covering 229–241 (DHPHGGGEGRTGE) has biased composition (basic and acidic residues).

The protein belongs to the universal ribosomal protein uL2 family. In terms of assembly, part of the 50S ribosomal subunit. Forms a bridge to the 30S subunit in the 70S ribosome.

One of the primary rRNA binding proteins. Required for association of the 30S and 50S subunits to form the 70S ribosome, for tRNA binding and peptide bond formation. It has been suggested to have peptidyltransferase activity; this is somewhat controversial. Makes several contacts with the 16S rRNA in the 70S ribosome. The chain is Large ribosomal subunit protein uL2 from Chromobacterium violaceum (strain ATCC 12472 / DSM 30191 / JCM 1249 / CCUG 213 / NBRC 12614 / NCIMB 9131 / NCTC 9757 / MK).